The primary structure comprises 243 residues: NH(3)-dependent NAD(+) synthetase (243 aa).

31–38 contacts ATP; the sequence is GLSGGVDS. D37 is a Mg(2+) binding site. R116 contacts deamido-NAD(+). ATP is bound at residue T136. Mg(2+) is bound at residue E141. Deamido-NAD(+)-binding residues include K149 and D156. Residues K165 and S187 each coordinate ATP. 233–234 provides a ligand contact to deamido-NAD(+); the sequence is HK.

The protein belongs to the NAD synthetase family. In terms of assembly, homodimer.

It catalyses the reaction deamido-NAD(+) + NH4(+) + ATP = AMP + diphosphate + NAD(+) + H(+). It participates in cofactor biosynthesis; NAD(+) biosynthesis; NAD(+) from deamido-NAD(+) (ammonia route): step 1/1. Its function is as follows. Catalyzes the ATP-dependent amidation of deamido-NAD to form NAD. Uses ammonia as a nitrogen source. In Carboxydothermus hydrogenoformans (strain ATCC BAA-161 / DSM 6008 / Z-2901), this protein is NH(3)-dependent NAD(+) synthetase.